Here is a 298-residue protein sequence, read N- to C-terminus: Inosose dehydratase (298 aa).

It belongs to the IolE/MocC family. Glutathione serves as cofactor. Requires Co(2+) as cofactor. Mn(2+) is required as a cofactor.

It catalyses the reaction scyllo-inosose = 3D-3,5/4-trihydroxycyclohexane-1,2-dione + H2O. Functionally, catalyzes the dehydration of inosose (2-keto-myo-inositol, 2KMI or 2,4,6/3,5-pentahydroxycyclohexanone) to 3D-(3,5/4)-trihydroxycyclohexane-1,2-dione (D-2,3-diketo-4-deoxy-epi-inositol). This chain is Inosose dehydratase, found in Serratia proteamaculans (strain 568).